The primary structure comprises 339 residues: GTPase Obg (339 aa).

Residues 1 to 159 enclose the Obg domain; the sequence is MKFVDEAFVR…RELKLELKLL (159 aa). The segment at 127 to 147 is disordered; it reads NTHFKSSTNRAPRRTTSGEEG. Residues 160–333 form the OBG-type G domain; the sequence is ADVGLLGLPN…LCYDLMSFLE (174 aa). GTP contacts are provided by residues 166-173, 191-195, 213-216, 283-286, and 314-316; these read GLPNAGKS, FTTLY, DIPG, NKID, and SAI. Residues Ser173 and Thr193 each coordinate Mg(2+).

This sequence belongs to the TRAFAC class OBG-HflX-like GTPase superfamily. OBG GTPase family. Monomer. Mg(2+) serves as cofactor.

The protein localises to the cytoplasm. An essential GTPase which binds GTP, GDP and possibly (p)ppGpp with moderate affinity, with high nucleotide exchange rates and a fairly low GTP hydrolysis rate. Plays a role in control of the cell cycle, stress response, ribosome biogenesis and in those bacteria that undergo differentiation, in morphogenesis control. The protein is GTPase Obg of Coxiella burnetii (strain CbuG_Q212) (Coxiella burnetii (strain Q212)).